Reading from the N-terminus, the 424-residue chain is uncharacterized protein (424 aa).

Lys259 is subject to N6-(pyridoxal phosphate)lysine.

It belongs to the class-III pyridoxal-phosphate-dependent aminotransferase family. Pyridoxal 5'-phosphate serves as cofactor.

This is an uncharacterized protein from Archaeoglobus fulgidus (strain ATCC 49558 / DSM 4304 / JCM 9628 / NBRC 100126 / VC-16).